The chain runs to 257 residues: NAD-dependent protein deacylase (257 aa).

Residues 1-252 (MLGHAAKLLA…LRRVKDIMAE (252 aa)) enclose the Deacetylase sirtuin-type domain. 20–39 (GAGISAESGIPTFRGRNGLW) contacts NAD(+). Positions 64 and 67 each coordinate substrate. 98-101 (QNVD) is an NAD(+) binding site. His116 functions as the Proton acceptor in the catalytic mechanism. Zn(2+)-binding residues include Cys124, Cys127, Cys151, and Cys154. Residues 191-193 (GTS), 217-219 (NVE), and Ala235 contribute to the NAD(+) site.

The protein belongs to the sirtuin family. Class III subfamily. Zn(2+) serves as cofactor.

Its subcellular location is the cytoplasm. It carries out the reaction N(6)-acetyl-L-lysyl-[protein] + NAD(+) + H2O = 2''-O-acetyl-ADP-D-ribose + nicotinamide + L-lysyl-[protein]. It catalyses the reaction N(6)-succinyl-L-lysyl-[protein] + NAD(+) + H2O = 2''-O-succinyl-ADP-D-ribose + nicotinamide + L-lysyl-[protein]. Functionally, NAD-dependent lysine deacetylase and desuccinylase that specifically removes acetyl and succinyl groups on target proteins. Modulates the activities of several proteins which are inactive in their acylated form. Deacetylates the N-terminal lysine residue of Alba, the major archaeal chromatin protein and that, in turn, increases Alba's DNA binding affinity, thereby repressing transcription. This chain is NAD-dependent protein deacylase, found in Thermococcus kodakarensis (strain ATCC BAA-918 / JCM 12380 / KOD1) (Pyrococcus kodakaraensis (strain KOD1)).